Consider the following 882-residue polypeptide: HTH-type transcriptional regulator AlkS (882 aa).

A51 to T58 serves as a coordination point for ATP. The region spanning E815–G880 is the HTH luxR-type domain. The H-T-H motif DNA-binding region spans N839–R858.

The protein operates within hydrocarbon metabolism; alkane degradation. In terms of biological role, this protein activates the expression of alkBFGHJKL operon in the presence of alkanes. The sequence is that of HTH-type transcriptional regulator AlkS (alkS) from Ectopseudomonas oleovorans (Pseudomonas oleovorans).